We begin with the raw amino-acid sequence, 986 residues long: Ephrin type-A receptor 4 (986 aa).

A signal peptide spans 1 to 19 (MAGIFYFALFSCLFGICDA). Residues 20–547 (VTGSRVYPAN…RIIGDGANST (528 aa)) lie on the Extracellular side of the membrane. Residues 30 to 209 (EVTLLDSRSV…FYKKCPLTVR (180 aa)) form the Eph LBD domain. Asn-235, Asn-340, and Asn-408 each carry an N-linked (GlcNAc...) asparagine glycan. Fibronectin type-III domains follow at residues 328–439 (PPSA…TNQA) and 440–537 (APSS…TVPS). An N-linked (GlcNAc...) asparagine glycan is attached at Asn-545. Residues 548–569 (VLLVSVSGSVVLVVILIAAFVI) form a helical membrane-spanning segment. Residues 570 to 986 (SRRRSKYSKA…QQMHGRMVPV (417 aa)) are Cytoplasmic-facing. A phosphotyrosine; by autocatalysis mark is found at Tyr-596 and Tyr-602. In terms of domain architecture, Protein kinase spans 621–882 (IKIEKVIGVG…QIVNMLDKLI (262 aa)). ATP is bound by residues 627–635 (IGVGEFGEV) and Lys-653. The active-site Proton acceptor is the Asp-746. Phosphotyrosine; by autocatalysis is present on residues Tyr-779 and Tyr-928. Residues 911 to 975 (SAVVSVGDWL…LSSVQAMRTQ (65 aa)) form the SAM domain. A PDZ-binding motif is present at residues 984–986 (VPV).

Belongs to the protein kinase superfamily. Tyr protein kinase family. Ephrin receptor subfamily. As to quaternary structure, heterotetramer upon binding of the ligand. The heterotetramer is composed of an ephrin dimer and a receptor dimer. Oligomerization is probably required to induce biological responses. Interacts (phosphorylated at position Tyr-602) with FYN. Interacts with CDK5, CDK5R1 and NGEF; upon activation by EFNA1 induces NGEF phosphorylation by the kinase CDK5. Interacts with CHN1; effector of EPHA4 in axon guidance linking EPHA4 activation to RAC1 regulation. Interacts (via PDZ motif) with SIPA1L1 (via PDZ domain); controls neuronal morphology through regulation of the RAP1 (RAP1A or RAP1B) and RAP2 (RAP2A, RAP2B or RAP2C) GTPases. Forms a ternary complex composed of ADAM10, CADH1 and EPHA4; within the complex, CADH1 is cleaved by ADAM10 which disrupts adherens junctions. Ubiquitous.

It is found in the cell membrane. Its subcellular location is the cell projection. The protein resides in the axon. It localises to the dendrite. The protein localises to the postsynaptic density membrane. It is found in the early endosome. Its subcellular location is the cell junction. The protein resides in the adherens junction. It catalyses the reaction L-tyrosyl-[protein] + ATP = O-phospho-L-tyrosyl-[protein] + ADP + H(+). Receptor tyrosine kinase which binds membrane-bound ephrin family ligands residing on adjacent cells, leading to contact-dependent bidirectional signaling into neighboring cells. The signaling pathway downstream of the receptor is referred to as forward signaling while the signaling pathway downstream of the ephrin ligand is referred to as reverse signaling. Highly promiscuous, it has the unique property among Eph receptors to bind and to be physiologically activated by both GPI-anchored ephrin-A and transmembrane ephrin-B ligands including EFNA1 and EFNB3. Upon activation by ephrin ligands, modulates cell morphology and integrin-dependent cell adhesion through regulation of the Rac, Rap and Rho GTPases activity. Plays an important role in the development of the nervous system controlling different steps of axonal guidance including the establishment of the corticospinal projections. May also control the segregation of motor and sensory axons during neuromuscular circuit development. In addition to its role in axonal guidance plays a role in synaptic plasticity. Activated by EFNA1 phosphorylates CDK5 at 'Tyr-15' which in turn phosphorylates NGEF regulating RHOA and dendritic spine morphogenesis. In the nervous system, also plays a role in repair after injury preventing axonal regeneration and in angiogenesis playing a role in central nervous system vascular formation. Additionally, its promiscuity makes it available to participate in a variety of cell-cell signaling regulating for instance the development of the thymic epithelium. During development of the cochlear organ of Corti, regulates pillar cell separation by forming a ternary complex with ADAM10 and CADH1 which facilitates the cleavage of CADH1 by ADAM10 and disruption of adherens junctions. Phosphorylates CAPRIN1, promoting CAPRIN1-dependent formation of a membraneless compartment. This Homo sapiens (Human) protein is Ephrin type-A receptor 4 (EPHA4).